A 51-amino-acid polypeptide reads, in one-letter code: Large ribosomal subunit protein bL33 (51 aa).

This sequence belongs to the bacterial ribosomal protein bL33 family. In terms of assembly, part of the 50S ribosomal subunit. Cross-links to the P and E site tRNAs.

The chain is Large ribosomal subunit protein bL33 from Pseudomonas aeruginosa (strain ATCC 15692 / DSM 22644 / CIP 104116 / JCM 14847 / LMG 12228 / 1C / PRS 101 / PAO1).